The following is a 436-amino-acid chain: Adenylosuccinate synthetase (436 aa).

Residues 12-18 and 40-42 contribute to the GTP site; these read GDEGKGK and GHT. Asp-13 serves as the catalytic Proton acceptor. Mg(2+) is bound by residues Asp-13 and Gly-40. Residues 13-16, 38-41, Thr-128, Arg-142, Gln-223, Thr-238, and Arg-302 each bind IMP; these read DEGK and NAGH. His-41 acts as the Proton donor in catalysis. 298 to 304 contacts substrate; that stretch reads TTTGRRR. GTP is bound by residues Arg-304, 330–332, and 412–414; these read KLD and SLG.

This sequence belongs to the adenylosuccinate synthetase family. As to quaternary structure, homodimer. The cofactor is Mg(2+).

It localises to the cytoplasm. The enzyme catalyses IMP + L-aspartate + GTP = N(6)-(1,2-dicarboxyethyl)-AMP + GDP + phosphate + 2 H(+). The protein operates within purine metabolism; AMP biosynthesis via de novo pathway; AMP from IMP: step 1/2. Its function is as follows. Plays an important role in the de novo pathway of purine nucleotide biosynthesis. Catalyzes the first committed step in the biosynthesis of AMP from IMP. The protein is Adenylosuccinate synthetase of Prochlorococcus marinus (strain MIT 9312).